A 147-amino-acid chain; its full sequence is Ubiquitin-conjugating enzyme E2 D4 (147 aa).

The region spanning 1–147 is the UBC core domain; the sequence is MALKRIQKEL…AREWTQKYAM (147 aa). C85 (glycyl thioester intermediate) is an active-site residue.

Belongs to the ubiquitin-conjugating enzyme family. Interacts with map3k10/mlk2. At embryonic stages 28 to 35, expressed in the somites, eye primordia, otic vesicle and branchial arches. By stage 35, also weakly expressed in the pronephros.

The enzyme catalyses S-ubiquitinyl-[E1 ubiquitin-activating enzyme]-L-cysteine + [E2 ubiquitin-conjugating enzyme]-L-cysteine = [E1 ubiquitin-activating enzyme]-L-cysteine + S-ubiquitinyl-[E2 ubiquitin-conjugating enzyme]-L-cysteine.. It functions in the pathway protein modification; protein ubiquitination. In terms of biological role, catalyzes the covalent attachment of ubiquitin to other proteins. Regulates pronephros development, possibly by promoting ubiquitination and thus inactivation or degradation of map3k10/mlk2. The chain is Ubiquitin-conjugating enzyme E2 D4 (ube2d4) from Xenopus laevis (African clawed frog).